Here is a 700-residue protein sequence, read N- to C-terminus: MNPNNTGTIEINGKEYNTFTEPPVAMAQERAKTSFPVREMTYFLDGGEKNTLKNEQIMEEIERDPLFNNDNYYDLNKEQIRELTMERVAKLSLFVRDQPEDDIKKRFALIGIADMGTYTRLGVHYGLFFGAVRGTGTAEQFGHWISKGAGDLRKFYGCFSMTELGHGSNLAGLETTAIYDEETDEFIINTPHIAATKWWIGGAAHTATHTVVFARLIVKGKDYGVKTFVVQLRNINDHSLKVGISIGDIGKKMGRDGIDNGWIQFTNVRIPRQNLLMKYTKVDREGNVTQPPLAQLTYGSLITGRVSMASDSHQVGKRFITIALRYACIRRQFSTTPGQPETKIIDYPYHQRRLLPLLAYVYALKMTADEVGALFSRTMLKMDDLKPDDKAGLNEVVSDVKELFSVSAGLKAFSTWACADVIDKTRQACGGHGYSGYNGFGQAYADWVVQCTWEGDNNILTLSAGRALIQSAVALRKGEPVGNAVSYLKRYKDLANAKLNGRSLTDPKVLVEAWEVAAGNIINRATDQYEKLIGEGLNADQAFEVLSQQRFQAAKVHTRRHLIAAFFSRIDTEAGEAIKQPLLNLALLFALWSIEEDSGLFLREGFLEPKDIDTVTELVNKYCTTVREEVIGYTDAFNLSDYFINAPIGCYDGDAYRHYFQKVNEQNPARDPRPPYYASTLKPFLFREEEDDDICELDEE.

Belongs to the acyl-CoA oxidase family. In terms of assembly, heteropentamer composed of five different subunits. It depends on FAD as a cofactor.

The protein localises to the peroxisome. The catalysed reaction is a 2,3-saturated acyl-CoA + O2 = a (2E)-enoyl-CoA + H2O2. It functions in the pathway lipid metabolism; peroxisomal fatty acid beta-oxidation. Functionally, oxidizes strain chain acyl-CoAs with a chain length of 10 to 14 carbons. Also active toward the 2S isomers of acyl-CoA-esters containing a 2-methyl group. This Yarrowia lipolytica (strain CLIB 122 / E 150) (Yeast) protein is Acyl-coenzyme A oxidase 2 (POX2).